A 259-amino-acid polypeptide reads, in one-letter code: Ribosomal RNA small subunit methyltransferase A (259 aa).

S-adenosyl-L-methionine-binding residues include N13, T15, G40, E61, D85, and N105.

The protein belongs to the class I-like SAM-binding methyltransferase superfamily. rRNA adenine N(6)-methyltransferase family. RsmA subfamily.

The protein localises to the cytoplasm. The catalysed reaction is adenosine(1518)/adenosine(1519) in 16S rRNA + 4 S-adenosyl-L-methionine = N(6)-dimethyladenosine(1518)/N(6)-dimethyladenosine(1519) in 16S rRNA + 4 S-adenosyl-L-homocysteine + 4 H(+). In terms of biological role, specifically dimethylates two adjacent adenosines (A1518 and A1519) in the loop of a conserved hairpin near the 3'-end of 16S rRNA in the 30S particle. May play a critical role in biogenesis of 30S subunits. This chain is Ribosomal RNA small subunit methyltransferase A, found in Mycoplasma genitalium (strain ATCC 33530 / DSM 19775 / NCTC 10195 / G37) (Mycoplasmoides genitalium).